Consider the following 66-residue polypeptide: Large ribosomal subunit protein bL33c (66 aa).

Belongs to the bacterial ribosomal protein bL33 family.

It localises to the plastid. The protein resides in the chloroplast. This is Large ribosomal subunit protein bL33c from Fagopyrum esculentum subsp. ancestrale (Wild buckwheat).